The sequence spans 324 residues: Melanoma-associated antigen B16 (324 aa).

Residues 1-15 are compositionally biased toward basic and acidic residues; sequence MSQDQESPRCTHDQH. 2 disordered regions span residues 1 to 22 and 39 to 108; these read MSQD…FSET and LSSS…PRNV. The segment covering 70–81 has biased composition (low complexity); that stretch reads SSSIAVTTTSSS. The span at 82–95 shows a compositional bias: acidic residues; it reads ESDEASSNQEEEDS. An MAGE domain is found at 113–312; it reads LDQKVAFLVN…HSFPSQYAEA (200 aa).

This Homo sapiens (Human) protein is Melanoma-associated antigen B16 (MAGEB16).